We begin with the raw amino-acid sequence, 444 residues long: Proline--tRNA ligase (444 aa).

The protein belongs to the class-II aminoacyl-tRNA synthetase family. ProS type 2 subfamily. As to quaternary structure, homodimer.

Its subcellular location is the cytoplasm. It catalyses the reaction tRNA(Pro) + L-proline + ATP = L-prolyl-tRNA(Pro) + AMP + diphosphate. In terms of biological role, catalyzes the attachment of proline to tRNA(Pro) in a two-step reaction: proline is first activated by ATP to form Pro-AMP and then transferred to the acceptor end of tRNA(Pro). This chain is Proline--tRNA ligase, found in Methylobacterium sp. (strain 4-46).